We begin with the raw amino-acid sequence, 369 residues long: Homoserine O-succinyltransferase (369 aa).

The tract at residues 1–21 is disordered; sequence MVRIVPSARRTRAPAKLDGRS. In terms of domain architecture, AB hydrolase-1 spans 86 to 350; that stretch reads VVFVAGGISA…PFGHDAFLKE (265 aa). The interval 92–95 is important for substrate specificity; it reads GISA. The active-site Nucleophile is the Ser172. Position 233 (Arg233) interacts with substrate. Active-site residues include Asp314 and His344. Asp345 serves as a coordination point for substrate.

It belongs to the AB hydrolase superfamily. MetX family. As to quaternary structure, homodimer.

The protein resides in the cytoplasm. The enzyme catalyses L-homoserine + succinyl-CoA = O-succinyl-L-homoserine + CoA. Its pathway is amino-acid biosynthesis; L-methionine biosynthesis via de novo pathway; O-succinyl-L-homoserine from L-homoserine: step 1/1. Transfers a succinyl group from succinyl-CoA to L-homoserine, forming succinyl-L-homoserine. The protein is Homoserine O-succinyltransferase of Xanthomonas campestris pv. campestris (strain ATCC 33913 / DSM 3586 / NCPPB 528 / LMG 568 / P 25).